A 306-amino-acid chain; its full sequence is Bifunctional protein FolD (306 aa).

NADP(+) contacts are provided by residues 166–168 (GRS) and I232.

It belongs to the tetrahydrofolate dehydrogenase/cyclohydrolase family. In terms of assembly, homodimer.

The enzyme catalyses (6R)-5,10-methylene-5,6,7,8-tetrahydrofolate + NADP(+) = (6R)-5,10-methenyltetrahydrofolate + NADPH. It carries out the reaction (6R)-5,10-methenyltetrahydrofolate + H2O = (6R)-10-formyltetrahydrofolate + H(+). The protein operates within one-carbon metabolism; tetrahydrofolate interconversion. Functionally, catalyzes the oxidation of 5,10-methylenetetrahydrofolate to 5,10-methenyltetrahydrofolate and then the hydrolysis of 5,10-methenyltetrahydrofolate to 10-formyltetrahydrofolate. This Methylorubrum extorquens (strain CM4 / NCIMB 13688) (Methylobacterium extorquens) protein is Bifunctional protein FolD.